Consider the following 300-residue polypeptide: Ribonuclease HIII (300 aa).

The RNase H type-2 domain occupies 83 to 300 (IPIIGSDEVG…THKAQALLTK (218 aa)). Positions 89, 90, and 194 each coordinate a divalent metal cation.

It belongs to the RNase HII family. RnhC subfamily. It depends on Mn(2+) as a cofactor. Mg(2+) serves as cofactor.

It is found in the cytoplasm. It catalyses the reaction Endonucleolytic cleavage to 5'-phosphomonoester.. Endonuclease that specifically degrades the RNA of RNA-DNA hybrids. This is Ribonuclease HIII from Streptococcus pyogenes serotype M5 (strain Manfredo).